A 240-amino-acid chain; its full sequence is Sugar fermentation stimulation protein homolog (240 aa).

The protein belongs to the SfsA family.

This is Sugar fermentation stimulation protein homolog from Natranaerobius thermophilus (strain ATCC BAA-1301 / DSM 18059 / JW/NM-WN-LF).